The chain runs to 317 residues: Melanocyte-stimulating hormone receptor (317 aa).

Residues 1–37 (MPVQGSQRRLLGSLNSTPTATPHLGLAANQTGARCLE) lie on the Extracellular side of the membrane. The N-linked (GlcNAc...) asparagine glycan is linked to Asn29. The helical transmembrane segment at 38–63 (VSIPDGLFLSLGLVSLVENVLVVTAI) threads the bilayer. The Cytoplasmic segment spans residues 64-72 (AKNRNLHSP). The chain crosses the membrane as a helical span at residues 73–93 (MYCFICCLALSDLLVSGSNML). Residues 94-118 (ETAVILLLEAGALAARAAVVQQLDN) lie on the Extracellular side of the membrane. Residues 119–140 (VIDVITCSSMLASLCFLGAIAV) form a helical membrane-spanning segment. Topologically, residues 141-163 (DRYISIFYALRYHSIVTLPRARR) are cytoplasmic. A helical membrane pass occupies residues 164–183 (AVAAIWVASVLFSMLFIAYY). Over 184-191 (DHAAVLLC) the chain is Extracellular. The chain crosses the membrane as a helical span at residues 192–211 (LVVFFLAMLVLMAVLYIHML). Topologically, residues 212–240 (ARARQHAQGIARLHKRQCPAHQGFGLKGA) are cytoplasmic. Residues 241-266 (ATLTILLGIFFLCWGPFFLHLTLIVL) traverse the membrane as a helical segment. Over 267 to 279 (CPQHPTCSCIFKN) the chain is Extracellular. The helical transmembrane segment at 280–300 (FNLFLALIICNAIIDPLIYAF) threads the bilayer. Residues 301 to 317 (RSQELRRTLKEVLLCSW) are Cytoplasmic-facing. Cys315 carries S-palmitoyl cysteine lipidation.

This sequence belongs to the G-protein coupled receptor 1 family. As to quaternary structure, interacts with MGRN1, but does not undergo MGRN1-mediated ubiquitination; this interaction competes with GNAS-binding and thus inhibits agonist-induced cAMP production. Interacts with OPN3; the interaction results in a decrease in MC1R-mediated cAMP signaling and ultimately a decrease in melanin production in melanocytes.

The protein localises to the cell membrane. Its function is as follows. Receptor for MSH (alpha, beta and gamma) and ACTH. The activity of this receptor is mediated by G proteins which activate adenylate cyclase. Mediates melanogenesis, the production of eumelanin (black/brown) and phaeomelanin (red/yellow), via regulation of cAMP signaling in melanocytes. The sequence is that of Melanocyte-stimulating hormone receptor (MC1R) from Cercopithecus mitis (Blue monkey).